The following is a 1360-amino-acid chain: DNA-directed RNA polymerase subunit beta (1360 aa).

Belongs to the RNA polymerase beta chain family. The RNAP catalytic core consists of 2 alpha, 1 beta, 1 beta' and 1 omega subunit. When a sigma factor is associated with the core the holoenzyme is formed, which can initiate transcription.

It catalyses the reaction RNA(n) + a ribonucleoside 5'-triphosphate = RNA(n+1) + diphosphate. DNA-dependent RNA polymerase catalyzes the transcription of DNA into RNA using the four ribonucleoside triphosphates as substrates. In Vesicomyosocius okutanii subsp. Calyptogena okutanii (strain HA), this protein is DNA-directed RNA polymerase subunit beta.